The primary structure comprises 365 residues: WAT1-related protein At4g01440 (365 aa).

10 consecutive transmembrane segments (helical) span residues 8 to 28 (WTPV…NALV), 40 to 60 (VIAT…AFFW), 72 to 92 (ILVQ…YFFL), 101 to 121 (TLAC…ALIF), 132 to 152 (AGMG…LLTM), 181 to 201 (WIIG…WMLI), 213 to 233 (YSST…LSLI), 249 to 269 (IVTI…GTSW), 277 to 297 (IFTS…DFLI), and 302 to 322 (IFLG…IFLL). 2 consecutive EamA domains span residues 25-144 (NALV…LICI) and 196-321 (GSWM…YIFL).

It belongs to the drug/metabolite transporter (DMT) superfamily. Plant drug/metabolite exporter (P-DME) (TC 2.A.7.4) family.

Its subcellular location is the membrane. The polypeptide is WAT1-related protein At4g01440 (Arabidopsis thaliana (Mouse-ear cress)).